A 432-amino-acid polypeptide reads, in one-letter code: Queuine tRNA-ribosyltransferase accessory subunit 2 (432 aa).

Cysteine 329, cysteine 331, cysteine 334, and histidine 360 together coordinate Zn(2+). The disordered stretch occupies residues 390–432 (GQKSLPPYEPPKEEKLPMPAAQKAELMEPMEDLGEKQNKKQRA). A compositionally biased stretch (basic and acidic residues) spans 422 to 432 (LGEKQNKKQRA).

This sequence belongs to the queuine tRNA-ribosyltransferase family. QTRT2 subfamily. In terms of assembly, heterodimer of a catalytic subunit and an accessory subunit. Zn(2+) serves as cofactor.

The protein resides in the cytoplasm. Functionally, non-catalytic subunit of the queuine tRNA-ribosyltransferase (TGT) that catalyzes the base-exchange of a guanine (G) residue with queuine (Q) at position 34 (anticodon wobble position) in tRNAs with GU(N) anticodons (tRNA-Asp, -Asn, -His and -Tyr), resulting in the hypermodified nucleoside queuosine (7-(((4,5-cis-dihydroxy-2-cyclopenten-1-yl)amino)methyl)-7-deazaguanosine). This chain is Queuine tRNA-ribosyltransferase accessory subunit 2, found in Anopheles gambiae (African malaria mosquito).